A 695-amino-acid polypeptide reads, in one-letter code: Elongation factor G 2 (695 aa).

One can recognise a tr-type G domain in the interval 5–280 (SKYRNIGIFA…AVVDYLPSPT (276 aa)). Residues 14–21 (AHVDAGKT), 78–82 (DTPGH), and 132–135 (NKLD) each bind GTP.

This sequence belongs to the TRAFAC class translation factor GTPase superfamily. Classic translation factor GTPase family. EF-G/EF-2 subfamily.

Its subcellular location is the cytoplasm. Its function is as follows. Catalyzes the GTP-dependent ribosomal translocation step during translation elongation. During this step, the ribosome changes from the pre-translocational (PRE) to the post-translocational (POST) state as the newly formed A-site-bound peptidyl-tRNA and P-site-bound deacylated tRNA move to the P and E sites, respectively. Catalyzes the coordinated movement of the two tRNA molecules, the mRNA and conformational changes in the ribosome. The sequence is that of Elongation factor G 2 from Vibrio vulnificus (strain YJ016).